Here is a 636-residue protein sequence, read N- to C-terminus: 1-deoxy-D-xylulose-5-phosphate synthase (636 aa).

Residues His72 and 113–115 (GHA) contribute to the thiamine diphosphate site. Residue Asp144 coordinates Mg(2+). Thiamine diphosphate-binding positions include 145–146 (GA), Asn174, Tyr287, and Glu370. Asn174 is a Mg(2+) binding site.

Belongs to the transketolase family. DXPS subfamily. Homodimer. Requires Mg(2+) as cofactor. It depends on thiamine diphosphate as a cofactor.

The catalysed reaction is D-glyceraldehyde 3-phosphate + pyruvate + H(+) = 1-deoxy-D-xylulose 5-phosphate + CO2. Its pathway is metabolic intermediate biosynthesis; 1-deoxy-D-xylulose 5-phosphate biosynthesis; 1-deoxy-D-xylulose 5-phosphate from D-glyceraldehyde 3-phosphate and pyruvate: step 1/1. Its function is as follows. Catalyzes the acyloin condensation reaction between C atoms 2 and 3 of pyruvate and glyceraldehyde 3-phosphate to yield 1-deoxy-D-xylulose-5-phosphate (DXP). The polypeptide is 1-deoxy-D-xylulose-5-phosphate synthase (Microcystis aeruginosa (strain NIES-843 / IAM M-2473)).